The chain runs to 84 residues: Small ribosomal subunit protein bS18B (84 aa).

It belongs to the bacterial ribosomal protein bS18 family. As to quaternary structure, part of the 30S ribosomal subunit. Forms a tight heterodimer with protein bS6.

Binds as a heterodimer with protein bS6 to the central domain of the 16S rRNA, where it helps stabilize the platform of the 30S subunit. This is Small ribosomal subunit protein bS18B from Mycolicibacterium smegmatis (strain ATCC 700084 / mc(2)155) (Mycobacterium smegmatis).